The chain runs to 247 residues: MWVGVISLFPEMFRSVTDFGVTGQAVKKGLLSIETWNPRDFTHDKHRTVDDRPYGGGPGMLMMVQPLRDAIHTAKAASPGKTKVIYLSPQGRKLDQKGVEELATNENLLLICGRYEGVDERIIQSEVDEEWSIGDFVMTGGEIPAMTLIDSVSRFVPGVLGDFASAEEDSFANGLLDCPHYTRPEVLDDKEVPAVLMSGNHKDIRQWRLKQSLGRTWLRRPELLENLALTDEQEQLLAEFISEHNAK.

S-adenosyl-L-methionine is bound by residues Gly-113 and 133–138; that span reads IGDFVM.

Belongs to the RNA methyltransferase TrmD family. Homodimer.

It localises to the cytoplasm. It catalyses the reaction guanosine(37) in tRNA + S-adenosyl-L-methionine = N(1)-methylguanosine(37) in tRNA + S-adenosyl-L-homocysteine + H(+). Specifically methylates guanosine-37 in various tRNAs. In Vibrio campbellii (strain ATCC BAA-1116), this protein is tRNA (guanine-N(1)-)-methyltransferase.